The sequence spans 177 residues: ATP-dependent protease subunit HslV (177 aa).

Threonine 2 is an active-site residue. Na(+) is bound by residues alanine 159, aspartate 162, and threonine 165.

The protein belongs to the peptidase T1B family. HslV subfamily. A double ring-shaped homohexamer of HslV is capped on each side by a ring-shaped HslU homohexamer. The assembly of the HslU/HslV complex is dependent on binding of ATP.

The protein localises to the cytoplasm. It carries out the reaction ATP-dependent cleavage of peptide bonds with broad specificity.. With respect to regulation, allosterically activated by HslU binding. Its function is as follows. Protease subunit of a proteasome-like degradation complex believed to be a general protein degrading machinery. In Lactobacillus leichmannii, this protein is ATP-dependent protease subunit HslV.